We begin with the raw amino-acid sequence, 254 residues long: 2-dehydro-3-deoxy-D-gluconate 5-dehydrogenase (254 aa).

Position 16-40 (16-40) interacts with NAD(+); sequence LVTGPGTGIGQGIAKALAGAGADII. S146 contacts substrate. Catalysis depends on Y159, which acts as the Proton acceptor.

It belongs to the short-chain dehydrogenases/reductases (SDR) family.

It catalyses the reaction 2-dehydro-3-deoxy-D-gluconate + NAD(+) = 3-deoxy-D-glycero-2,5-hexodiulosonate + NADH + H(+). It participates in glycan metabolism; pectin degradation; 2-dehydro-3-deoxy-D-gluconate from pectin: step 5/5. Functionally, catalyzes the reduction of 2,5-diketo-3-deoxygluconate (DKII or 4,6-dihydroxy-2,5-dioxohexanoate) into 2-keto-3-deoxygluconate (KDG or 2-dehydro-3-deoxygluconate) with a concomitant oxidation of NADH. This is 2-dehydro-3-deoxy-D-gluconate 5-dehydrogenase (kduD) from Bacillus subtilis (strain 168).